Here is a 188-residue protein sequence, read N- to C-terminus: ATP synthase subunit delta (188 aa).

It belongs to the ATPase delta chain family. F-type ATPases have 2 components, F(1) - the catalytic core - and F(0) - the membrane proton channel. F(1) has five subunits: alpha(3), beta(3), gamma(1), delta(1), epsilon(1). F(0) has three main subunits: a(1), b(2) and c(10-14). The alpha and beta chains form an alternating ring which encloses part of the gamma chain. F(1) is attached to F(0) by a central stalk formed by the gamma and epsilon chains, while a peripheral stalk is formed by the delta and b chains.

It is found in the cell inner membrane. In terms of biological role, f(1)F(0) ATP synthase produces ATP from ADP in the presence of a proton or sodium gradient. F-type ATPases consist of two structural domains, F(1) containing the extramembraneous catalytic core and F(0) containing the membrane proton channel, linked together by a central stalk and a peripheral stalk. During catalysis, ATP synthesis in the catalytic domain of F(1) is coupled via a rotary mechanism of the central stalk subunits to proton translocation. Functionally, this protein is part of the stalk that links CF(0) to CF(1). It either transmits conformational changes from CF(0) to CF(1) or is implicated in proton conduction. This chain is ATP synthase subunit delta, found in Rhizobium etli (strain ATCC 51251 / DSM 11541 / JCM 21823 / NBRC 15573 / CFN 42).